Reading from the N-terminus, the 433-residue chain is Histidinol dehydrogenase (433 aa).

NAD(+) is bound by residues Tyr-130, Gln-191, and Asn-214. Residues Ser-237, Gln-259, and His-262 each coordinate substrate. 2 residues coordinate Zn(2+): Gln-259 and His-262. Catalysis depends on proton acceptor residues Glu-327 and His-328. The substrate site is built by His-328, Asp-361, Glu-415, and His-420. Asp-361 lines the Zn(2+) pocket. His-420 is a Zn(2+) binding site.

The protein belongs to the histidinol dehydrogenase family. It depends on Zn(2+) as a cofactor.

The enzyme catalyses L-histidinol + 2 NAD(+) + H2O = L-histidine + 2 NADH + 3 H(+). It participates in amino-acid biosynthesis; L-histidine biosynthesis; L-histidine from 5-phospho-alpha-D-ribose 1-diphosphate: step 9/9. In terms of biological role, catalyzes the sequential NAD-dependent oxidations of L-histidinol to L-histidinaldehyde and then to L-histidine. The sequence is that of Histidinol dehydrogenase from Ruegeria pomeroyi (strain ATCC 700808 / DSM 15171 / DSS-3) (Silicibacter pomeroyi).